Reading from the N-terminus, the 356-residue chain is ATP-dependent 6-phosphofructokinase (356 aa).

Residues Gly15, Lys78–Gly79, and Gly115–Thr118 contribute to the ATP site. Position 116 (Glu116) interacts with Mg(2+). Residues Thr138–Asp140, Arg175, Met182–Arg184, Glu235, Arg272, and His278–Arg281 each bind substrate. The Proton acceptor role is filled by Asp140.

Belongs to the phosphofructokinase type A (PFKA) family. Mixed-substrate PFK group III subfamily. Homodimer or homotetramer. Requires Mg(2+) as cofactor.

It localises to the cytoplasm. It carries out the reaction beta-D-fructose 6-phosphate + ATP = beta-D-fructose 1,6-bisphosphate + ADP + H(+). It functions in the pathway carbohydrate degradation; glycolysis; D-glyceraldehyde 3-phosphate and glycerone phosphate from D-glucose: step 3/4. Functionally, catalyzes the phosphorylation of D-fructose 6-phosphate to fructose 1,6-bisphosphate by ATP, the first committing step of glycolysis. The protein is ATP-dependent 6-phosphofructokinase of Chloroflexus aggregans (strain MD-66 / DSM 9485).